Reading from the N-terminus, the 382-residue chain is Phosphatidylglycerol--prolipoprotein diacylglyceryl transferase (382 aa).

The next 3 membrane-spanning stretches (helical) occupy residues 18–38 (IQWY…MFVF), 53–73 (FFIF…SFVI), and 91–111 (LAIQ…FNFF). Arg-162 provides a ligand contact to a 1,2-diacyl-sn-glycero-3-phospho-(1'-sn-glycerol). Transmembrane regions (helical) follow at residues 213–233 (IPLF…IYFV), 243–263 (GTIG…LENF), 274–294 (ITTS…CQFI), and 302–322 (FWTY…TTLF).

This sequence belongs to the Lgt family.

It is found in the cell membrane. It catalyses the reaction L-cysteinyl-[prolipoprotein] + a 1,2-diacyl-sn-glycero-3-phospho-(1'-sn-glycerol) = an S-1,2-diacyl-sn-glyceryl-L-cysteinyl-[prolipoprotein] + sn-glycerol 1-phosphate + H(+). It participates in protein modification; lipoprotein biosynthesis (diacylglyceryl transfer). Functionally, catalyzes the transfer of the diacylglyceryl group from phosphatidylglycerol to the sulfhydryl group of the N-terminal cysteine of a prolipoprotein, the first step in the formation of mature lipoproteins. In Mycoplasma genitalium (strain ATCC 33530 / DSM 19775 / NCTC 10195 / G37) (Mycoplasmoides genitalium), this protein is Phosphatidylglycerol--prolipoprotein diacylglyceryl transferase.